Here is a 1665-residue protein sequence, read N- to C-terminus: Mediator of RNA polymerase II transcription subunit 13 (1665 aa).

4 disordered regions span residues 411 to 460 (KETE…IDKN), 482 to 512 (INLD…ETKP), 551 to 580 (TVSQ…GTET), and 673 to 781 (LDSS…NQIS). The span at 415 to 445 (PENESENDMEIDDLFGGDESDDNDDLEEAGN) shows a compositional bias: acidic residues. Residues 499–512 (VPDKENFKPKETKP) show a composition bias toward basic and acidic residues. The segment covering 551-568 (TVSQSAVTTNPPSVGSAP) has biased composition (low complexity). Positions 682–720 (EGGEDIEDDDNDYEDEGDDDEEEEGEEEEEEESDEDEIS) are enriched in acidic residues. Residues 728–762 (LKLNTQNESVPPQQSNYNPVNITDSGSNTTNNITD) show a composition bias toward polar residues.

It belongs to the Mediator complex subunit 13 family. In terms of assembly, component of the SRB8-11 complex, which itself associates with the Mediator complex.

It localises to the nucleus. Functionally, component of the SRB8-11 complex. The SRB8-11 complex is a regulatory module of the Mediator complex which is itself involved in regulation of basal and activated RNA polymerase II-dependent transcription. The SRB8-11 complex may be involved in the transcriptional repression of a subset of genes regulated by Mediator. It may inhibit the association of the Mediator complex with RNA polymerase II to form the holoenzyme complex. This chain is Mediator of RNA polymerase II transcription subunit 13 (SSN2), found in Candida albicans (strain SC5314 / ATCC MYA-2876) (Yeast).